The primary structure comprises 191 residues: Cell division protein SepF (191 aa).

The interval 21-96 (EVEEPAVASV…NQQPAQEKTT (76 aa)) is disordered. A compositionally biased stretch (low complexity) spans 25–56 (PAVASVKRQQDAAQPASQQQKAQSHQYHQSAS). Polar residues-rich tracts occupy residues 57–69 (RPSQ…GQNR) and 86–95 (HNQQPAQEKT).

The protein belongs to the SepF family. Homodimer. Interacts with FtsZ.

It localises to the cytoplasm. Functionally, cell division protein that is part of the divisome complex and is recruited early to the Z-ring. Probably stimulates Z-ring formation, perhaps through the cross-linking of FtsZ protofilaments. Its function overlaps with FtsA. The protein is Cell division protein SepF of Streptococcus mutans serotype c (strain ATCC 700610 / UA159).